Consider the following 238-residue polypeptide: 1-(5-phosphoribosyl)-5-[(5-phosphoribosylamino)methylideneamino] imidazole-4-carboxamide isomerase (238 aa).

Aspartate 8 functions as the Proton acceptor in the catalytic mechanism. Aspartate 129 acts as the Proton donor in catalysis.

It belongs to the HisA/HisF family.

Its subcellular location is the cytoplasm. It catalyses the reaction 1-(5-phospho-beta-D-ribosyl)-5-[(5-phospho-beta-D-ribosylamino)methylideneamino]imidazole-4-carboxamide = 5-[(5-phospho-1-deoxy-D-ribulos-1-ylimino)methylamino]-1-(5-phospho-beta-D-ribosyl)imidazole-4-carboxamide. The protein operates within amino-acid biosynthesis; L-histidine biosynthesis; L-histidine from 5-phospho-alpha-D-ribose 1-diphosphate: step 4/9. In Brachyspira hyodysenteriae (strain ATCC 49526 / WA1), this protein is 1-(5-phosphoribosyl)-5-[(5-phosphoribosylamino)methylideneamino] imidazole-4-carboxamide isomerase.